Consider the following 259-residue polypeptide: Tryptophan synthase alpha chain (259 aa).

Catalysis depends on proton acceptor residues Glu35 and Asp46.

This sequence belongs to the TrpA family. In terms of assembly, tetramer of two alpha and two beta chains.

It catalyses the reaction (1S,2R)-1-C-(indol-3-yl)glycerol 3-phosphate + L-serine = D-glyceraldehyde 3-phosphate + L-tryptophan + H2O. It functions in the pathway amino-acid biosynthesis; L-tryptophan biosynthesis; L-tryptophan from chorismate: step 5/5. Its function is as follows. The alpha subunit is responsible for the aldol cleavage of indoleglycerol phosphate to indole and glyceraldehyde 3-phosphate. This chain is Tryptophan synthase alpha chain, found in Methanococcus maripaludis (strain C5 / ATCC BAA-1333).